The following is a 599-amino-acid chain: DNA primase (599 aa).

The CHC2-type zinc-finger motif lies at 38-62 (CPFHQEKTPSFTVSDSKRFFYCFGC). Positions 250 to 332 (NYSILVEGYF…EKKISFIRLP (83 aa)) constitute a Toprim domain. Residues E256, D300, and D302 each contribute to the Mg(2+) site.

This sequence belongs to the DnaG primase family. Monomer. Interacts with DnaB. Requires Zn(2+) as cofactor. Mg(2+) is required as a cofactor.

The catalysed reaction is ssDNA + n NTP = ssDNA/pppN(pN)n-1 hybrid + (n-1) diphosphate.. RNA polymerase that catalyzes the synthesis of short RNA molecules used as primers for DNA polymerase during DNA replication. This Rickettsia bellii (strain RML369-C) protein is DNA primase.